A 233-amino-acid polypeptide reads, in one-letter code: Homeobox protein not2 (233 aa).

Residues L135–S194 constitute a DNA-binding region (homeobox). The segment at S212–L233 is disordered. Over residues R220–L233 the composition is skewed to acidic residues.

As to expression, localized to the dorsal lip of the blastopore (Spemann organizer) during early gastrulation, after which expression continues in tissues derived from the organizer. Expressed in the notochord during mid-gastrulation, the chordoneural hinge, notochord and ventral spinal cord of the tailbud at stage 22, and finally the tip of the tail in the tadpole (stage 35).

Its subcellular location is the nucleus. In terms of biological role, transcriptional repressor. Plays a fundamental role in notochord formation, acting within the mesodermal region. Acts downstream of gsc and upstream of chrd and foxa4-A/pintallavis. The polypeptide is Homeobox protein not2 (Xenopus laevis (African clawed frog)).